A 347-amino-acid chain; its full sequence is 3,4-dihydroxy-2-butanone 4-phosphate synthase (347 aa).

The DHBP synthase stretch occupies residues 1–200 (MPLNRVREAI…ISDLIEYRMQ (200 aa)). Residues 27–28 (RE), D32, 139–143 (RTGHT), and E163 each bind D-ribulose 5-phosphate. Mg(2+) is bound at residue E28. Residue H142 participates in Mg(2+) binding. Positions 201 to 347 (NEMLILIKER…IVLQGGPIQL (147 aa)) are GTP cyclohydrolase II-like.

It in the N-terminal section; belongs to the DHBP synthase family. This sequence in the C-terminal section; belongs to the GTP cyclohydrolase II family. Requires Mg(2+) as cofactor. It depends on Mn(2+) as a cofactor.

The catalysed reaction is D-ribulose 5-phosphate = (2S)-2-hydroxy-3-oxobutyl phosphate + formate + H(+). Its pathway is cofactor biosynthesis; riboflavin biosynthesis; 2-hydroxy-3-oxobutyl phosphate from D-ribulose 5-phosphate: step 1/1. Its function is as follows. Catalyzes the conversion of D-ribulose 5-phosphate to formate and 3,4-dihydroxy-2-butanone 4-phosphate. This chain is 3,4-dihydroxy-2-butanone 4-phosphate synthase (ribB), found in Wolinella succinogenes (strain ATCC 29543 / DSM 1740 / CCUG 13145 / JCM 31913 / LMG 7466 / NCTC 11488 / FDC 602W) (Vibrio succinogenes).